The chain runs to 502 residues: Lysine--tRNA ligase (502 aa).

The interval 1-22 (MSDHEQAQAQSQDENQIMAERR) is disordered. 2 residues coordinate Mg(2+): Glu-413 and Glu-420.

The protein belongs to the class-II aminoacyl-tRNA synthetase family. As to quaternary structure, homodimer. Requires Mg(2+) as cofactor.

It localises to the cytoplasm. It catalyses the reaction tRNA(Lys) + L-lysine + ATP = L-lysyl-tRNA(Lys) + AMP + diphosphate. In Chromobacterium violaceum (strain ATCC 12472 / DSM 30191 / JCM 1249 / CCUG 213 / NBRC 12614 / NCIMB 9131 / NCTC 9757 / MK), this protein is Lysine--tRNA ligase.